Reading from the N-terminus, the 658-residue chain is MKNNIKVILIGDEQVGKSTIINSFISESFSEITQKTLPEVTIPAEFNNEICSTRIIDTFDDGKNLKNQMNMEIRTADAIVIVYSVDRFDTFMSIRMKWIPLINQLRGSNKSPIIIVGNKLDLVDDKHENNKVQIEETIQYFRSTYSNTIQWLECSAKTMENLPELLYASQTSVFFPERILYNREENKMTEGCERALKRIFKLCDHDNDGSLSEEEINYFQTKCGHETMTSEEIQNIQQFVLSKIPDGVNSNGFTEKGFLYMNLLFLLRGPCQHTWTSLRSFNYDDDLVLLESYVHPTLQVPPNHNTILSSMGNEFFKSLFEKYDSDSDGVLSSFDLVSLFSTTPKIPWEIGFEKHFNTDKDSNLTLSGFLSLWNLQTYENYKVTLEYLAYFGSQTENNNIDMISILNSRELDIKSNQFTRNIVNCYVFGAEAVGKTTFLNTFIGKSFSTLYNATNGNDNFKVCGHLLKNKYLILSEYVGEKIPTAELKSKCDLVCLLYDCNSEQSFKFIENIYNQLKQQQLNIPIVFIRTKNNNNNNNNNNNNNNNNNNNNLNNNNNNINNNNNNNNNNTTTTNANVSTSKIIDSFFKSHKNYSPKDFSISRSNSIYHEMMETIVNSSFNDNSNGSNGSNNSNILTYLVIAAGVAGVGLLLSKYLAKK.

The Cytoplasmic portion of the chain corresponds to 1–633 (MKNNIKVILI…NGSNGSNNSN (633 aa)). The region spanning 2–175 (KNNIKVILIG…LYASQTSVFF (174 aa)) is the Miro 1 domain. GTP contacts are provided by residues 11–18 (GDEQVGKS), 57–62 (DTFDDG), and 118–121 (NKLD). 2 EF-hand domains span residues 191–226 (GCERALKRIFKLCDHDNDGSLSEEEINYFQTKCGHE) and 311–346 (MGNEFFKSLFEKYDSDSDGVLSSFDLVSLFSTTPKI). Residues aspartate 204, aspartate 206, aspartate 208, serine 210, glutamate 215, aspartate 324, aspartate 326, aspartate 328, and aspartate 335 each coordinate Ca(2+). In terms of domain architecture, Miro 2 spans 420–616 (RNIVNCYVFG…YHEMMETIVN (197 aa)). GTP contacts are provided by residues 429-436 (GAEAVGKT), 466-468 (LLK), and 530-533 (TKNN). Positions 532–575 (NNNNNNNNNNNNNNNNNNNNLNNNNNNINNNNNNNNNNTTTTNA) are disordered. The chain crosses the membrane as a helical; Anchor for type IV membrane protein span at residues 634 to 656 (ILTYLVIAAGVAGVGLLLSKYLA). At 657-658 (KK) the chain is on the mitochondrial intermembrane side.

Belongs to the mitochondrial Rho GTPase family.

Its subcellular location is the mitochondrion outer membrane. In terms of biological role, mitochondrial GTPase involved in mitochondrial trafficking. Probably involved in control of anterograde transport of mitochondria and their subcellular distribution. The polypeptide is Probable mitochondrial Rho GTPase gemA (gemA) (Dictyostelium discoideum (Social amoeba)).